The primary structure comprises 40 residues: Fibrinolytic protease (40 aa).

One can recognise a Peptidase S1 domain in the interval 1 to 40; it reads IVGGNEVTPHAYPWQVGLFIDDMYFCGGSISVTLTGWGKP.

It belongs to the peptidase S1 family.

The protein resides in the secreted. It is found in the extracellular space. Functionally, serine protease with fibrinolytic activity. The chain is Fibrinolytic protease from Euphausia superba (Antarctic krill).